The primary structure comprises 878 residues: Serine/threonine-protein kinase N3 (878 aa).

3 consecutive REM-1 domains span residues 2–77, 86–165, and 169–238; these read EHRK…QVLL, SEPQ…SGSP, and PDLL…RLPP. Phosphoserine is present on S164. A disordered region spans residues 461-525; the sequence is PNTASPPKGR…TPCTKRPHMD (65 aa). Residues 548-807 enclose the Protein kinase domain; it reads FRCLAVLGRG…AEEIKVQPFF (260 aa). ATP contacts are provided by residues 554–562 and K577; that span reads LGRGHFGKV. The active-site Proton acceptor is D673. 3 positions are modified to phosphothreonine: T707, T711, and T849. The AGC-kinase C-terminal domain occupies 808 to 878; it reads RTTNWQALLA…DFVSEQFLES (71 aa).

The protein belongs to the protein kinase superfamily. AGC Ser/Thr protein kinase family. PKC subfamily. Autophosphorylated.

It is found in the nucleus. It localises to the cytoplasm. The protein localises to the perinuclear region. It catalyses the reaction L-seryl-[protein] + ATP = O-phospho-L-seryl-[protein] + ADP + H(+). The enzyme catalyses L-threonyl-[protein] + ATP = O-phospho-L-threonyl-[protein] + ADP + H(+). Two specific sites, Thr-707 (activation loop of the kinase domain) and Thr-849 (turn motif), need to be phosphorylated for its full activation. In terms of biological role, contributes to invasiveness in malignant prostate cancer. The polypeptide is Serine/threonine-protein kinase N3 (Pkn3) (Mus musculus (Mouse)).